The primary structure comprises 207 residues: Ribosomal RNA small subunit methyltransferase G (207 aa).

Residues glycine 75, methionine 80, 126 to 127 (VE), and arginine 141 each bind S-adenosyl-L-methionine.

The protein belongs to the methyltransferase superfamily. RNA methyltransferase RsmG family.

It is found in the cytoplasm. The catalysed reaction is guanosine(527) in 16S rRNA + S-adenosyl-L-methionine = N(7)-methylguanosine(527) in 16S rRNA + S-adenosyl-L-homocysteine. In terms of biological role, specifically methylates the N7 position of guanine in position 527 of 16S rRNA. The chain is Ribosomal RNA small subunit methyltransferase G from Laribacter hongkongensis (strain HLHK9).